A 439-amino-acid polypeptide reads, in one-letter code: Xylose isomerase (439 aa).

Catalysis depends on residues His101 and Asp104. The Mg(2+) site is built by Glu232, Glu268, His271, Asp296, Asp307, Asp309, and Asp339.

Belongs to the xylose isomerase family. As to quaternary structure, homotetramer. The cofactor is Mg(2+).

The protein resides in the cytoplasm. The catalysed reaction is alpha-D-xylose = alpha-D-xylulofuranose. This chain is Xylose isomerase, found in Yersinia pestis bv. Antiqua (strain Angola).